A 1571-amino-acid polypeptide reads, in one-letter code: Neurexin-3 (1571 aa).

Residues 1 to 27 (MSFTLHSVFFTLKVSIFLGSLVGLCLG) form the signal peptide. In terms of domain architecture, Laminin G-like 1 spans 28 to 202 (LEFMGLPNQW…SVQLEAEGPC (175 aa)). Residues 28–1496 (LEFMGLPNQW…EVIRESSSTT (1469 aa)) are Extracellular-facing. Residues N58 and N105 are each glycosylated (N-linked (GlcNAc...) asparagine). The EGF-like 1 domain maps to 198–235 (AEGPCGERPCENGGICFLLDGHPTCDCSTTGYGGTLCS). 3 disulfide bridges follow: C202–C213, C207–C222, and C224–C234. Laminin G-like domains are found at residues 258–440 (VATF…VFKC) and 447–639 (DPIN…KSSC). D304, L321, and M374 together coordinate Ca(2+). Cystine bridges form between C404–C440, C610–C639, C647–C658, C652–C667, and C669–C679. In terms of domain architecture, EGF-like 2 spans 643–680 (SAKQCDSYPCKNNAVCKDGWNRFICDCTGTGYWGRTCE). 2 Laminin G-like domains span residues 685-857 (ILSY…IDYC) and 871-1046 (DPVT…ERGC). The Ca(2+) site is built by D732 and L749. N-linked (GlcNAc...) asparagine glycosylation occurs at N757. Position 807 (R807) interacts with Ca(2+). 4 cysteine pairs are disulfide-bonded: C1018-C1046, C1053-C1064, C1058-C1073, and C1075-C1085. Residues 1049-1086 (PSTTCQEDSCANQGVCMQQWEGFTCDCSMTSYSGNQCN) form the EGF-like 3 domain. The Laminin G-like 6 domain occupies 1090–1290 (ATYIFGKSGG…NPNIKINGSV (201 aa)). The Ca(2+) site is built by D1142 and I1159. N1189 carries N-linked (GlcNAc...) asparagine glycosylation. Ca(2+) is bound by residues I1241 and N1243. Residues N1287 and N1331 are each glycosylated (N-linked (GlcNAc...) asparagine). The interval 1324–1348 (ATTTTRKNRSTASIQPTSDDLVSSA) is disordered. Positions 1333-1348 (STASIQPTSDDLVSSA) are enriched in polar residues. O-linked (Xyl...) (heparan sulfate) serine glycosylation is present at S1347. Residues 1497 to 1517 (GMVVGIVAAAALCILILLYAM) traverse the membrane as a helical segment. Residues 1518–1571 (YKYRNRDEGSYQVDETRNYISNSAQSNGTLMKEKQASSKSGHKKQKNKDKEYYV) are Cytoplasmic-facing. Residues 1539–1571 (NSAQSNGTLMKEKQASSKSGHKKQKNKDKEYYV) form a disordered region.

This sequence belongs to the neurexin family. In terms of assembly, the laminin G-like domain 2 binds to NXPH1. Specific isoforms bind to alpha-dystroglycan. The cytoplasmic C-terminal region binds to CASK. Specific isoforms bind neuroligins NLGN1, NLGN2 and NLGN3. Interacts with CLSTN3. Post-translationally, O-glycosylated; contains heparan sulfate. Heparan sulfate attachment is required for synapse development by mediating interactions with neuroligins. As to expression, brain and arteries (at protein level).

The protein resides in the presynaptic cell membrane. In terms of biological role, neuronal cell surface protein that may be involved in cell recognition and cell adhesion. May mediate intracellular signaling. The polypeptide is Neurexin-3 (Nrxn3) (Mus musculus (Mouse)).